The chain runs to 140 residues: Cytochrome c oxidase subunit 6, mitochondrial (140 aa).

This sequence belongs to the cytochrome c oxidase subunit 5A family. As to quaternary structure, component of the cytochrome c oxidase (complex IV, CIV), a multisubunit enzyme composed of a catalytic core of 3 subunits and several supernumerary subunits. The complex exists as a monomer or a dimer and forms supercomplexes (SCs) in the inner mitochondrial membrane with ubiquinol-cytochrome c oxidoreductase (cytochrome b-c1 complex, complex III, CIII).

Its subcellular location is the mitochondrion inner membrane. It participates in energy metabolism; oxidative phosphorylation. Component of the cytochrome c oxidase, the last enzyme in the mitochondrial electron transport chain which drives oxidative phosphorylation. The respiratory chain contains 3 multisubunit complexes succinate dehydrogenase (complex II, CII), ubiquinol-cytochrome c oxidoreductase (cytochrome b-c1 complex, complex III, CIII) and cytochrome c oxidase (complex IV, CIV), that cooperate to transfer electrons derived from NADH and succinate to molecular oxygen, creating an electrochemical gradient over the inner membrane that drives transmembrane transport and the ATP synthase. Cytochrome c oxidase is the component of the respiratory chain that catalyzes the reduction of oxygen to water. Electrons originating from reduced cytochrome c in the intermembrane space (IMS) are transferred via the dinuclear copper A center (CU(A)) of subunit 2 and heme A of subunit 1 to the active site in subunit 1, a binuclear center (BNC) formed by heme A3 and copper B (CU(B)). The BNC reduces molecular oxygen to 2 water molecules using 4 electrons from cytochrome c in the IMS and 4 protons from the mitochondrial matrix. The sequence is that of Cytochrome c oxidase subunit 6, mitochondrial (cox6) from Schizosaccharomyces pombe (strain 972 / ATCC 24843) (Fission yeast).